The chain runs to 542 residues: GMP synthase [glutamine-hydrolyzing] (542 aa).

The Glutamine amidotransferase type-1 domain occupies Met-28–Thr-218. Catalysis depends on Cys-105, which acts as the Nucleophile. Catalysis depends on residues His-192 and Glu-194. In terms of domain architecture, GMPS ATP-PPase spans Trp-219 to Arg-417. Ser-246 to Ser-252 serves as a coordination point for ATP.

In terms of assembly, homodimer.

It catalyses the reaction XMP + L-glutamine + ATP + H2O = GMP + L-glutamate + AMP + diphosphate + 2 H(+). The protein operates within purine metabolism; GMP biosynthesis; GMP from XMP (L-Gln route): step 1/1. Its function is as follows. Catalyzes the synthesis of GMP from XMP. In Gloeothece citriformis (strain PCC 7424) (Cyanothece sp. (strain PCC 7424)), this protein is GMP synthase [glutamine-hydrolyzing].